Here is a 686-residue protein sequence, read N- to C-terminus: Probable metal-nicotianamine transporter YSL10 (686 aa).

14 helical membrane passes run 36–56, 60–80, 109–129, 151–171, 212–232, 271–291, 316–336, 383–403, 415–435, 461–481, 501–521, 556–576, 597–617, and 639–659; these read VTLRALAVSALLGAMFSVIVM, LTTGIIPSLNVSAGLLGFFLL, CVVACSGIAFSGGFGSYIFAM, LGWMIGFLFIVSFLGLFSVVP, MLGKFFVMSFSWGFFQWFYTG, LVNISVLLGGVMSWGIMWPLI, VFISISLILGDGLYNFLKVMT, IPNWLALSAYVVIAVVSIATV, VAVSYVVAPVLAFCNAYGCGL, GGIIAGLAACGVMIGIVSTAS, FVSQVIGTAMGCVIAPSVFWL, GSLPKHCLDLCIGFFVAAIAV, MAIPFYLGPYFGIDMCIGSLI, and GLICGDGIWTLPQSVLALAGV.

This sequence belongs to the YSL (TC 2.A.67.2) family.

Its subcellular location is the membrane. Functionally, may be involved in the transport of nicotianamine-chelated metals. The chain is Probable metal-nicotianamine transporter YSL10 (YSL10) from Oryza sativa subsp. japonica (Rice).